The sequence spans 126 residues: Large ribosomal subunit protein bL12 (126 aa).

Belongs to the bacterial ribosomal protein bL12 family. In terms of assembly, homodimer. Part of the ribosomal stalk of the 50S ribosomal subunit. Forms a multimeric L10(L12)X complex, where L10 forms an elongated spine to which 2 to 4 L12 dimers bind in a sequential fashion. Binds GTP-bound translation factors.

Forms part of the ribosomal stalk which helps the ribosome interact with GTP-bound translation factors. Is thus essential for accurate translation. The protein is Large ribosomal subunit protein bL12 of Moorella thermoacetica (strain ATCC 39073 / JCM 9320).